The sequence spans 115 residues: uncharacterized protein (115 aa).

Positions 9 to 30 (EGLRERGASGKNEQKKKKKEKI) are disordered.

This is an uncharacterized protein from Saccharomyces cerevisiae (strain ATCC 204508 / S288c) (Baker's yeast).